A 234-amino-acid polypeptide reads, in one-letter code: MGQVTGDLGWRLSLLLLPLLLVQAGSWGFPTDPLSLQELRREFTVSLYLARKLLSEVQGYVHSFAESRLPGVNLDLLPLGYHLPNVSLTFQAWHHLSDSERLCFLATTLRPFPAMLGGLGTQGTWTSSEREQLWAMRLDLRDLHRHLRFQVLAAGFKCSKEEEDKEEEEEEEEEEKKLPLGALGGPNQVSSQVSWPQLLYTYQLLHSLELVLSRAVRDLLLLSLPRRPGSAWDS.

Residues 1-28 form the signal peptide; it reads MGQVTGDLGWRLSLLLLPLLLVQAGSWG. A glycan (N-linked (GlcNAc...) asparagine) is linked at asparagine 85. A disordered region spans residues 160–185; sequence KEEEDKEEEEEEEEEEKKLPLGALGG. Over residues 161–174 the composition is skewed to acidic residues; the sequence is EEEDKEEEEEEEEE.

The protein belongs to the IL-6 superfamily. Heterodimer with EBI3; not disulfide-linked. This heterodimer is known as interleukin IL-27. In terms of processing, O-glycosylated. In terms of tissue distribution, expressed in macrophages and dendritic cells.

The protein localises to the secreted. In terms of biological role, associates with EBI3 to form the IL-27 interleukin, a heterodimeric cytokine which functions in innate immunity. IL-27 has pro- and anti-inflammatory properties, that can regulate T-helper cell development, suppress T-cell proliferation, stimulate cytotoxic T-cell activity, induce isotype switching in B-cells, and that has diverse effects on innate immune cells. Among its target cells are CD4 T-helper cells which can differentiate in type 1 effector cells (TH1), type 2 effector cells (TH2) and IL17 producing helper T-cells (TH17). It drives rapid clonal expansion of naive but not memory CD4 T-cells. It also strongly synergizes with IL-12 to trigger interferon-gamma/IFN-gamma production of naive CD4 T-cells, binds to the cytokine receptor WSX-1/TCCR which appears to be required but not sufficient for IL-27-mediated signal transduction. IL-27 potentiate the early phase of TH1 response and suppress TH2 and TH17 differentiation. It induces the differentiation of TH1 cells via two distinct pathways, p38 MAPK/TBX21- and ICAM1/ITGAL/ERK-dependent pathways. It also induces STAT1, STAT3, STAT4 and STAT5 phosphorylation and activates TBX21/T-Bet via STAT1 with resulting IL12RB2 up-regulation, an event crucial to TH1 cell commitment. It suppresses the expression of GATA3, the inhibitor TH1 cells development. In CD8 T-cells, it activates STATs as well as GZMB. IL-27 reveals to be a potent inhibitor of TH17 cell development and of IL-17 production. Indeed IL27 alone is also able to inhibit the production of IL17 by CD4 and CD8 T-cells. While IL-27 suppressed the development of pro-inflammatory Th17 cells via STAT1, it inhibits the development of anti-inflammatory inducible regulatory T-cells, iTreg, independently of STAT1. IL-27 also has an effect on cytokine production, it suppresses pro-inflammatory cytokine production such as IL2, IL4, IL5 and IL6 and activates suppressors of cytokine signaling such as SOCS1 and SOCS3. Apart from suppression of cytokine production, IL-27 also antagonizes the effects of some cytokines such as IL6 through direct effects on T-cells. Another important role of IL-27 is its antitumor activity as well as its antiangiogenic activity with activation of production of antiangiogenic chemokines such as IP-10/CXCL10 and MIG/CXCL9. This is Interleukin-27 subunit alpha (Il27) from Mus musculus (Mouse).